Reading from the N-terminus, the 327-residue chain is Sphingomyelin synthase-related 2 (327 aa).

5 helical membrane passes run 54-74, 99-119, 131-151, 192-212, and 220-240; these read LLATAMVGVGWLSNEVALAWV, AIRIAEYIMMILLISALLVMF, VFFCIAMAYSFRALCVTIFQV, LCGDLIVSGHTLTIFTAFLVF, and LQPLSHIYHVLAFTALFSILL. Residue His-201 is part of the active site. The Cytoplasmic segment spans residues 241–327; sequence ARKHYMIDIV…TLKKSRRSFE (87 aa). Catalysis depends on residues His-244 and Asp-248.

Belongs to the sphingomyelin synthase family.

It localises to the membrane. This chain is Sphingomyelin synthase-related 2, found in Caenorhabditis elegans.